The following is a 598-amino-acid chain: (+)-bornyl diphosphate synthase, chloroplastic (598 aa).

Residues 1–54 (MSIISMNVSILSKPLNCLHNLERRPSKALLVPCTAPTARLRASCSSKLQEAHQI) constitute a chloroplast transit peptide. R314 is a substrate binding site. Residues D351 and D355 each coordinate Mg(2+). The DDXXD motif motif lies at 351 to 355 (DDIYD). R493 is a binding site for substrate. Positions 496, 500, and 504 each coordinate Mg(2+). Position 500 (T500) interacts with substrate. K512 contacts substrate.

The protein belongs to the terpene synthase family. As to quaternary structure, homodimer. Mg(2+) serves as cofactor.

It is found in the plastid. The protein localises to the chloroplast. The catalysed reaction is (2E)-geranyl diphosphate = (2S,4R)-bornyl diphosphate. The enzyme catalyses (2E)-geranyl diphosphate = (1R,4S)-camphene + diphosphate. It catalyses the reaction (2E)-geranyl diphosphate = (1R,5R)-alpha-pinene + diphosphate. It functions in the pathway terpene metabolism; (R)-camphor biosynthesis. Functionally, catalyzes the formation of the (+)-camphor precursor (+)-bornyl diphosphate from geranyl diphosphate. The enzyme also produces significant amounts of (+)-alpha-pinene, (+)-camphene, and (+-)-limonene. This chain is (+)-bornyl diphosphate synthase, chloroplastic, found in Salvia officinalis (Sage).